Reading from the N-terminus, the 66-residue chain is UPF0370 protein YpfN (66 aa).

A helical membrane pass occupies residues 4–24 (LAKYWWILVLVFLVGVLLNVI). Residues 39-66 (KPELPPHRDFNDKWDDEDDWPKKDQPKK) form a disordered region. Over residues 42 to 51 (LPPHRDFNDK) the composition is skewed to basic and acidic residues.

The protein belongs to the UPF0370 family.

The protein localises to the cell membrane. This Salmonella paratyphi C (strain RKS4594) protein is UPF0370 protein YpfN.